The following is a 63-amino-acid chain: Sec-independent protein translocase protein TatA (63 aa).

A helical transmembrane segment spans residues 1–21 (MGGLSVGSVVLIALVALLIFG).

The protein belongs to the TatA/E family. Forms a complex with TatC.

The protein resides in the cell membrane. Its function is as follows. Part of the twin-arginine translocation (Tat) system that transports large folded proteins containing a characteristic twin-arginine motif in their signal peptide across membranes. TatA could form the protein-conducting channel of the Tat system. This chain is Sec-independent protein translocase protein TatA, found in Shouchella clausii (strain KSM-K16) (Alkalihalobacillus clausii).